The sequence spans 144 residues: Large ribosomal subunit protein uL15 (144 aa).

The interval 1-53 (MRLNTLSPAEGSKHASKRLGRGIGSGLGKTGGRGHKGQKSRSGGGVRRGFEGG) is disordered. Over residues 21 to 31 (RGIGSGLGKTG) the composition is skewed to gly residues.

The protein belongs to the universal ribosomal protein uL15 family. As to quaternary structure, part of the 50S ribosomal subunit.

Binds to the 23S rRNA. The chain is Large ribosomal subunit protein uL15 from Edwardsiella ictaluri (strain 93-146).